The following is a 158-amino-acid chain: Large ribosomal subunit protein bL19 (158 aa).

A disordered region spans residues 1-35 (MTADSKDTSMSEDNTETATAIENSSAMVTDVTSKS). Residues 16–35 (ETATAIENSSAMVTDVTSKS) are compositionally biased toward polar residues.

It belongs to the bacterial ribosomal protein bL19 family.

Functionally, this protein is located at the 30S-50S ribosomal subunit interface and may play a role in the structure and function of the aminoacyl-tRNA binding site. This Prochlorococcus marinus (strain MIT 9313) protein is Large ribosomal subunit protein bL19.